The chain runs to 141 residues: Bombinins BLP-7/H-BO (141 aa).

The signal sequence occupies residues 1-18 (MNFKYIIAVSFLIASTYA). Positions 19–43 (RSVKNDEQSLSQRDVLDEESLREIR) are excised as a propeptide. Asn-70 is modified (asparagine amide). The propeptide occupies 74-123 (TAEEHEVMKRLEAVMRDLDSLDHPEEASEKETRGFNQEEIANLFTKKEKR). Leu-140 is modified (leucine amide).

This sequence belongs to the bombinin family. Expressed by the skin glands.

The protein localises to the secreted. Antimicrobial peptide with activity against Gram-positive and -negative bacteria and fungi. Shows activity against P.acnes (MIC=5 uM), E.coli (MIC=5-6.3 uM), S.aureus (MIC=5-6.3 uM), M.luteus, S.cerevisiae and C.albicans (MIC=10-12.5 uM). Also reduces the production of interleukin (IL)-8 and granulocyte-macrophage colony stimulating factor (CSF2) in normal human epidermal keratinocytes (NHEKs). Shows anticancer activity against three human hepatoma cell lines. In vivo, using the rat ear edema model, suppress P.acnes-induced skin inflammation, significantly reducing the ear thickness. Shows weak hemolytic activity against human erythrocytes. Functionally, shows weak antimicrobial activity (tested on E.coli, S.aureus and C.albicans). Shows high hemolytic activity against human erythrocytes (38% erythrocyte lysis at 80.0 uM, and up to 85% at 159.7 uM). The polypeptide is Bombinins BLP-7/H-BO (Bombina orientalis (Oriental fire-bellied toad)).